A 149-amino-acid chain; its full sequence is MKVIFLQDVKGKGKKGEMKNVADGYAHNFLIKKGLAVEANATNISALKGQKEKEKKEAIAELERAKDLKETLEQLTVELSAKSGEGGRLFGSVTSKQIAEALQKTHKIKVDKRKLELQDGIRTLGYTNVPVKLHPEVQAVLKVHVKEEA.

This sequence belongs to the bacterial ribosomal protein bL9 family.

Its function is as follows. Binds to the 23S rRNA. In Bacillus velezensis (strain DSM 23117 / BGSC 10A6 / LMG 26770 / FZB42) (Bacillus amyloliquefaciens subsp. plantarum), this protein is Large ribosomal subunit protein bL9.